A 268-amino-acid polypeptide reads, in one-letter code: 5'-nucleotidase SurE (268 aa).

4 residues coordinate a divalent metal cation: D24, D25, S55, and N111.

Belongs to the SurE nucleotidase family. Requires a divalent metal cation as cofactor.

The protein resides in the cytoplasm. The catalysed reaction is a ribonucleoside 5'-phosphate + H2O = a ribonucleoside + phosphate. Its function is as follows. Nucleotidase that shows phosphatase activity on nucleoside 5'-monophosphates. The sequence is that of 5'-nucleotidase SurE from Deinococcus radiodurans (strain ATCC 13939 / DSM 20539 / JCM 16871 / CCUG 27074 / LMG 4051 / NBRC 15346 / NCIMB 9279 / VKM B-1422 / R1).